Reading from the N-terminus, the 453-residue chain is Tubulin alpha-13 chain (453 aa).

Gln11 is a binding site for GTP. Position 40 is an N6-acetyllysine (Lys40). Positions 71, 140, 144, 145, 179, 206, and 228 each coordinate GTP. Glu71 serves as a coordination point for Mg(2+). The active site involves Glu254. The segment at 429 to 453 (EKDYEEVGTESQEGDGEEGEDGGDQ) is disordered. Acidic residues predominate over residues 431–453 (DYEEVGTESQEGDGEEGEDGGDQ).

The protein belongs to the tubulin family. As to quaternary structure, dimer of alpha and beta chains. A typical microtubule is a hollow water-filled tube with an outer diameter of 25 nm and an inner diameter of 15 nM. Alpha-beta heterodimers associate head-to-tail to form protofilaments running lengthwise along the microtubule wall with the beta-tubulin subunit facing the microtubule plus end conferring a structural polarity. Microtubules usually have 13 protofilaments but different protofilament numbers can be found in some organisms and specialized cells. Mg(2+) is required as a cofactor. Acetylation of alpha chains at Lys-40 stabilizes microtubules and affects affinity and processivity of microtubule motors. This modification has a role in multiple cellular functions, ranging from cell motility, cell cycle progression or cell differentiation to intracellular trafficking and signaling.

The protein resides in the cytoplasm. It is found in the cytoskeleton. It carries out the reaction GTP + H2O = GDP + phosphate + H(+). Functionally, tubulin is the major constituent of microtubules, a cylinder consisting of laterally associated linear protofilaments composed of alpha- and beta-tubulin heterodimers. Microtubules grow by the addition of GTP-tubulin dimers to the microtubule end, where a stabilizing cap forms. Below the cap, tubulin dimers are in GDP-bound state, owing to GTPase activity of alpha-tubulin. The sequence is that of Tubulin alpha-13 chain (TUBA13) from Naegleria pringsheimi (Amoeba).